Reading from the N-terminus, the 1494-residue chain is MRILANKTRLPHPRRREAPGSPPLSPRGHCPPAPAKPMHPENKLTNHGKTGNGGAQSQHQNVNQGPTCNLGSKGVGAGSHGAKANQISPSNSSLKNPQAGVSPFSSLKGKVKRERSVSVDSGEQREAGTPSLDSEAKEVAPRSKRRCVLERKQPYSGDEWCSGPDSEEDDKPIAAAHNCNVADPAMVTPQLGPGQTAQLPLSESSAPGPQHGPQPGLRPDVPGGGGGGVPGKPPSQFVYVFTTHLANTAAEAVLQGRAESILAYHQQNVPRAKLDQAPKVPPTPEPLPLNTPSAGTPQSQPPPLPPPPPAPGSAPPALPPEGPPEDTSQDLAPNSVGAASTGGGTGGTHPNTPTAATANNPLPPGGDPGSAPGSALLGEATPTGNGQRNLVGSEGLSKEQLEHRERSLQTLRDIERLLLRSGETEPFLKGPPGGAGEGGPPAQAPSAAQPPPSAPPGGLKKYEEPLQSMISQTQSLGGPPLEHEVPGHPQGGDMGQQMNMMMQRLGQDSLTPEQVAWRKLQEEYYEEKRRKEEQIGLHGGRPLQDMVGMGGMMGRGPPPPYHSKPGDQWPPGMGAQLRGPMDVQDPMQLRPGPPFPGPRFPGNQMQRVPGFGGMQSMPMEVPMNAMQRPVRPGMAWNEDLPPIGGPSNFAQNAVPYPGGQGEAERFMTPRVREELLRHQLLEKRSMGMQRPLGMAGSGMGQSMEMERMIQAHRQMDPAMFPGQMTGGDGLAGTPMGIEFGGGRGLLSPPMGQSGLREVDPPMGPGNLNMNMNVNMNMNMNLNVQMTPQQQMLMSQKMRGPGDMMGPQGLSPEEMARVRAQNSSGMMGGPQKMLMPSQFPNQGQQGFSGGQGPYQAMPQDMGNTPDMFSPDQSSVPMGTVGTARLSHMPLPPASNPPGSVHLASNRGLGRRPSDLTISINQMGSPGMGHLKSPTLSQVHSPLVTSPSANLKSPQTPSQMVPLPSANPPGPLKSPQVLSSSLGVRSPTGSPSRLKSPSMAVPSPGWVASPKTAMPSPGVSQNKQPPLSINSSSTLGNVEQGALPPSAPRNSSSAPPANPSSGLMNPSLPFTSSPDPTPSQNPLSLMMSQMSKYAMPSSTPLYHNAIKTIATSDDELLPDRPLLPPPPPPQGSGPGISNNQPNQMHMNPAAAQSPMGMNLPGQQPLSHEPPPTMLPSPTPLGSNIPLHPNAQGTGGSSQNSMMMAPGGPDSLNAPCGPVPSSSQMMSFPPRLQQPHGAMAPTGAGGPGLQQHYPSGMALPPEDLPTQPPGPIPPQQHLMGKGMTGRMGDAYPPGVLPGVASVLNDPELSEVIRPTPTGIPEFDLSRIIPSEKPSSTLQYFPKSENQPPKAQPPNLHLMNLQNMMAEQTPSRPPNLPGQQGVQRGLSMSMCHPGQMSLLGRTGVPPQQGMVPHGLHQGVMSPPQGLMTQQNFMLMKQRGVGGEVYTQPPHMLSPQGSLMGPPPQQNLMVSHPLRQRSVSLDSQMGYLPTPGSMANLPF.

2 disordered regions span residues 1 to 236 (MRIL…PPSQ) and 269 to 496 (VPRA…DMGQ). A compositionally biased stretch (pro residues) spans 20–37 (GSPPLSPRGHCPPAPAKP). 2 positions are modified to phosphoserine: Ser21 and Ser25. N6-acetyllysine is present on Lys36. Polar residues-rich tracts occupy residues 45-70 (TNHG…TCNL) and 85-96 (NQISPSNSSLKN). Ser88 is modified (phosphoserine). Residues Lys108 and Lys110 each carry the N6-acetyllysine modification. Composition is skewed to basic and acidic residues over residues 114-126 (ERSV…EQRE) and 134-153 (SEAK…ERKQ). A phosphoserine mark is found at Ser116 and Ser118. Lys137 bears the N6-acetyllysine mark. Residues 193-207 (PGQTAQLPLSESSAP) are compositionally biased toward polar residues. 2 stretches are compositionally biased toward pro residues: residues 279-289 (KVPPTPEPLPL) and 299-322 (SQPP…PPEG). Residues 302 to 530 (PPLPPPPPAP…QEEYYEEKRR (229 aa)) form a necessary for interaction with CTNNB1 region. The span at 348–360 (THPNTPTAATANN) shows a compositional bias: low complexity. Residues 396–418 (LSKEQLEHRERSLQTLRDIERLL) show a composition bias toward basic and acidic residues. Ser421 is modified (phosphoserine). Thr511 is modified (phosphothreonine). Position 677 is an asymmetric dimethylarginine (Arg677). Phosphoserine occurs at positions 747, 810, 912, 923, 935, 939, 944, 972, 984, 988, 994, 1001, 1007, and 1014. 2 disordered regions span residues 905-1082 (RGLG…NPLS) and 1113-1206 (ELLP…PGGP). Residues 932 to 957 (PTLSQVHSPLVTSPSANLKSPQTPSQ) are compositionally biased toward polar residues. Residues 974 to 993 (QVLSSSLGVRSPTGSPSRLK) are compositionally biased toward polar residues. Over residues 1016–1035 (GVSQNKQPPLSINSSSTLGN) the composition is skewed to polar residues. The segment covering 1046–1059 (PRNSSSAPPANPSS) has biased composition (low complexity). Polar residues predominate over residues 1060–1082 (GLMNPSLPFTSSPDPTPSQNPLS). The segment covering 1119–1129 (PLLPPPPPPQG) has biased composition (pro residues). The segment covering 1133–1143 (GISNNQPNQMH) has biased composition (polar residues). A compositionally biased stretch (pro residues) spans 1165–1176 (HEPPPTMLPSPT). Lys1339 is covalently cross-linked (Glycyl lysine isopeptide (Lys-Gly) (interchain with G-Cter in SUMO2)).

It belongs to the BCL9 family. As to quaternary structure, found in a complex with CDC73; CTNNB1 and PYGO1. Interacts with CTNNB1. In terms of tissue distribution, expressed in kidney, liver, lung, testis, brain, spleen, heart and skeletal muscle. Highly expressed in numerous colorectal tumors compared to corresponding non-cancerous tissues.

The protein resides in the nucleus. Functionally, transcriptional regulator that acts as an activator. Promotes beta-catenin transcriptional activity. Plays a role in tumorigenesis. Enhances the neoplastic transforming activity of CTNNB1. The chain is B-cell CLL/lymphoma 9-like protein (Bcl9l) from Mus musculus (Mouse).